A 180-amino-acid chain; its full sequence is Shikimate kinase (180 aa).

14–19 (GAGKSC) is an ATP binding site. Ser-18 contacts Mg(2+). Substrate is bound by residues Asp-36, Arg-60, and Gly-82. Arg-120 contributes to the ATP binding site. Arg-139 serves as a coordination point for substrate.

The protein belongs to the shikimate kinase family. In terms of assembly, monomer. Mg(2+) is required as a cofactor.

It localises to the cytoplasm. It carries out the reaction shikimate + ATP = 3-phosphoshikimate + ADP + H(+). It participates in metabolic intermediate biosynthesis; chorismate biosynthesis; chorismate from D-erythrose 4-phosphate and phosphoenolpyruvate: step 5/7. In terms of biological role, catalyzes the specific phosphorylation of the 3-hydroxyl group of shikimic acid using ATP as a cosubstrate. The sequence is that of Shikimate kinase from Xanthomonas axonopodis pv. citri (strain 306).